A 354-amino-acid chain; its full sequence is Guanine nucleotide-binding protein G(o) subunit alpha (354 aa).

Glycine 2 carries N-myristoyl glycine lipidation. Cysteine 3 carries S-palmitoyl cysteine lipidation. Positions 32–354 (KDIKLLLLGA…ANNLRGCGLY (323 aa)) constitute a G-alpha domain. The G1 motif stretch occupies residues 35–48 (KLLLLGAGESGKST). GTP contacts are provided by residues 40–47 (GAGESGKS), 176–182 (LRTRVKT), 201–205 (DVGGQ), 270–273 (NKKD), and alanine 326. Residues serine 47 and threonine 182 each contribute to the Mg(2+) site. The segment at 174 to 182 (DILRTRVKT) is G2 motif. The interval 197–206 (FKLFDVGGQR) is G3 motif. The segment at 266-273 (ILFLNKKD) is G4 motif. Residues 324–329 (TCATDT) are G5 motif.

The protein belongs to the G-alpha family. G(i/o/t/z) subfamily. As to quaternary structure, g proteins are composed of 3 units; alpha, beta and gamma. The alpha chain contains the guanine nucleotide binding site.

Guanine nucleotide-binding proteins (G proteins) are involved as modulators or transducers in various transmembrane signaling systems. The G(o) protein function is not clear. The chain is Guanine nucleotide-binding protein G(o) subunit alpha from Planorbella trivolvis (Marsh rams-horn).